We begin with the raw amino-acid sequence, 200 residues long: Glycerol-3-phosphate acyltransferase (200 aa).

A run of 4 helical transmembrane segments spans residues 1–21 (MITVVLIFSAYLLGSISFAVV), 84–104 (VIAGAALAVFLGHLFPIFLAF), 116–136 (ILLGLNPWLGVLTISTWMVVA), and 159–179 (FLLEKGILIMAVSIISVLLIL).

Belongs to the PlsY family. In terms of assembly, probably interacts with PlsX.

The protein resides in the cell inner membrane. The catalysed reaction is an acyl phosphate + sn-glycerol 3-phosphate = a 1-acyl-sn-glycero-3-phosphate + phosphate. It participates in lipid metabolism; phospholipid metabolism. Its function is as follows. Catalyzes the transfer of an acyl group from acyl-phosphate (acyl-PO(4)) to glycerol-3-phosphate (G3P) to form lysophosphatidic acid (LPA). This enzyme utilizes acyl-phosphate as fatty acyl donor, but not acyl-CoA or acyl-ACP. In Nitrosomonas europaea (strain ATCC 19718 / CIP 103999 / KCTC 2705 / NBRC 14298), this protein is Glycerol-3-phosphate acyltransferase.